A 756-amino-acid polypeptide reads, in one-letter code: NUT family member 2F (756 aa).

Disordered stretches follow at residues 173–200 (GNAR…PDDS), 293–438 (IQKS…TSDP), 511–639 (RAAP…LPGM), and 653–756 (RLSQ…HCSQ). Over residues 304–321 (SLPPPAPPRLEPRGPPAP) the composition is skewed to pro residues. Basic and acidic residues predominate over residues 417-427 (EGQREKGKVEQ). Positions 543–560 (QRVSVETSPPQTAAQDPQ) are enriched in polar residues. The span at 654–665 (LSQSPVPSSGLL) shows a compositional bias: low complexity. A compositionally biased stretch (basic residues) spans 746–756 (SRRKKKRHCSQ).

The protein belongs to the NUT family.

The protein is NUT family member 2F (NUTM2F) of Homo sapiens (Human).